We begin with the raw amino-acid sequence, 518 residues long: Suppressor of hairless homolog (518 aa).

Residues 22 to 59 are disordered; sequence ETDQQRSHVKERVNGTPNQNGGTSTSSKPRSVFENRPP. Residues 24 to 34 are compositionally biased toward basic and acidic residues; sequence DQQRSHVKERV. Residues 36–50 show a composition bias toward polar residues; it reads GTPNQNGGTSTSSKP. 3 DNA-binding regions span residues 89–96, 223–232, and 296–328; these read KSYGNEKR, RLRSQTVSTR, and RKVD…ERMY. An IPT/TIG domain is found at 386 to 476; sequence PVVHSLQLNG…YPTNLTFTFT (91 aa).

This sequence belongs to the Su(H) family. In terms of assembly, interacts with activated Notch proteins.

The protein localises to the nucleus. Its function is as follows. Transcriptional regulator that plays a central role in Notch signaling, a signaling pathway involved in cell-cell communication that regulates a broad spectrum of cell-fate determinations. Acts as a transcriptional repressor when it is not associated with Notch proteins. When associated with some Notch protein, it acts as a transcriptional activator that activates transcription of Notch target genes. This is Suppressor of hairless homolog (RBP-JK) from Halocynthia roretzi (Sea squirt).